Reading from the N-terminus, the 740-residue chain is Phosphoribosylformylglycinamidine synthase subunit PurL (740 aa).

His-55 is a catalytic residue. 2 residues coordinate ATP: Tyr-58 and Lys-97. A Mg(2+)-binding site is contributed by Glu-99. Substrate contacts are provided by residues 100-103 (SHNH) and Arg-122. His-101 (proton acceptor) is an active-site residue. Residue Asp-123 coordinates Mg(2+). Gln-246 is a substrate binding site. Asp-276 provides a ligand contact to Mg(2+). 320-322 (ESQ) is a substrate binding site. ATP-binding residues include Asp-501 and Gly-538. Asn-539 lines the Mg(2+) pocket. Ser-541 contacts substrate.

It belongs to the FGAMS family. In terms of assembly, monomer. Part of the FGAM synthase complex composed of 1 PurL, 1 PurQ and 2 PurS subunits.

The protein resides in the cytoplasm. It catalyses the reaction N(2)-formyl-N(1)-(5-phospho-beta-D-ribosyl)glycinamide + L-glutamine + ATP + H2O = 2-formamido-N(1)-(5-O-phospho-beta-D-ribosyl)acetamidine + L-glutamate + ADP + phosphate + H(+). The protein operates within purine metabolism; IMP biosynthesis via de novo pathway; 5-amino-1-(5-phospho-D-ribosyl)imidazole from N(2)-formyl-N(1)-(5-phospho-D-ribosyl)glycinamide: step 1/2. In terms of biological role, part of the phosphoribosylformylglycinamidine synthase complex involved in the purines biosynthetic pathway. Catalyzes the ATP-dependent conversion of formylglycinamide ribonucleotide (FGAR) and glutamine to yield formylglycinamidine ribonucleotide (FGAM) and glutamate. The FGAM synthase complex is composed of three subunits. PurQ produces an ammonia molecule by converting glutamine to glutamate. PurL transfers the ammonia molecule to FGAR to form FGAM in an ATP-dependent manner. PurS interacts with PurQ and PurL and is thought to assist in the transfer of the ammonia molecule from PurQ to PurL. The sequence is that of Phosphoribosylformylglycinamidine synthase subunit PurL from Lacticaseibacillus casei (Lactobacillus casei).